A 160-amino-acid polypeptide reads, in one-letter code: Protein MGF 300-2R (160 aa).

Belongs to the asfivirus MGF 300 family.

Its function is as follows. Plays a role in virus cell tropism, and may be required for efficient virus replication in macrophages. The protein is Protein MGF 300-2R of African swine fever virus (isolate Pig/Kenya/KEN-50/1950) (ASFV).